We begin with the raw amino-acid sequence, 260 residues long: Imidazole glycerol phosphate synthase subunit HisF (260 aa).

Residues Asp11 and Asp130 contribute to the active site.

The protein belongs to the HisA/HisF family. In terms of assembly, heterodimer of HisH and HisF.

The protein resides in the cytoplasm. It carries out the reaction 5-[(5-phospho-1-deoxy-D-ribulos-1-ylimino)methylamino]-1-(5-phospho-beta-D-ribosyl)imidazole-4-carboxamide + L-glutamine = D-erythro-1-(imidazol-4-yl)glycerol 3-phosphate + 5-amino-1-(5-phospho-beta-D-ribosyl)imidazole-4-carboxamide + L-glutamate + H(+). It participates in amino-acid biosynthesis; L-histidine biosynthesis; L-histidine from 5-phospho-alpha-D-ribose 1-diphosphate: step 5/9. Functionally, IGPS catalyzes the conversion of PRFAR and glutamine to IGP, AICAR and glutamate. The HisF subunit catalyzes the cyclization activity that produces IGP and AICAR from PRFAR using the ammonia provided by the HisH subunit. This Psychrobacter arcticus (strain DSM 17307 / VKM B-2377 / 273-4) protein is Imidazole glycerol phosphate synthase subunit HisF.